A 112-amino-acid polypeptide reads, in one-letter code: Putative pterin-4-alpha-carbinolamine dehydratase (112 aa).

This sequence belongs to the pterin-4-alpha-carbinolamine dehydratase family.

It catalyses the reaction (4aS,6R)-4a-hydroxy-L-erythro-5,6,7,8-tetrahydrobiopterin = (6R)-L-erythro-6,7-dihydrobiopterin + H2O. The protein is Putative pterin-4-alpha-carbinolamine dehydratase of Shewanella putrefaciens (strain CN-32 / ATCC BAA-453).